The following is a 330-amino-acid chain: Elongation factor Ts (330 aa).

Positions 79–82 are involved in Mg(2+) ion dislocation from EF-Tu; that stretch reads TDFV.

Belongs to the EF-Ts family.

It localises to the cytoplasm. Its function is as follows. Associates with the EF-Tu.GDP complex and induces the exchange of GDP to GTP. It remains bound to the aminoacyl-tRNA.EF-Tu.GTP complex up to the GTP hydrolysis stage on the ribosome. In Bacteroides thetaiotaomicron (strain ATCC 29148 / DSM 2079 / JCM 5827 / CCUG 10774 / NCTC 10582 / VPI-5482 / E50), this protein is Elongation factor Ts.